A 324-amino-acid chain; its full sequence is Glyoxylate/hydroxypyruvate reductase B (324 aa).

Residues arginine 237 and glutamate 266 contribute to the active site. Catalysis depends on histidine 285, which acts as the Proton donor.

The protein belongs to the D-isomer specific 2-hydroxyacid dehydrogenase family. GhrB subfamily. As to quaternary structure, homodimer.

The protein resides in the cytoplasm. It catalyses the reaction glycolate + NADP(+) = glyoxylate + NADPH + H(+). The enzyme catalyses (R)-glycerate + NAD(+) = 3-hydroxypyruvate + NADH + H(+). The catalysed reaction is (R)-glycerate + NADP(+) = 3-hydroxypyruvate + NADPH + H(+). Catalyzes the NADPH-dependent reduction of glyoxylate and hydroxypyruvate into glycolate and glycerate, respectively. This chain is Glyoxylate/hydroxypyruvate reductase B, found in Salmonella schwarzengrund (strain CVM19633).